A 111-amino-acid chain; its full sequence is Small ribosomal subunit protein uS10 (111 aa).

Belongs to the universal ribosomal protein uS10 family. Part of the 30S ribosomal subunit.

Functionally, involved in the binding of tRNA to the ribosomes. This Xanthomonas euvesicatoria pv. vesicatoria (strain 85-10) (Xanthomonas campestris pv. vesicatoria) protein is Small ribosomal subunit protein uS10.